A 50-amino-acid polypeptide reads, in one-letter code: Insulin-1 (50 aa).

3 cysteine pairs are disulfide-bonded: Cys-7–Cys-36, Cys-19–Cys-49, and Cys-35–Cys-40.

The protein belongs to the insulin family. As to quaternary structure, heterodimer of a B chain and an A chain linked by two disulfide bonds.

The protein localises to the secreted. In terms of biological role, insulin decreases blood glucose concentration. It increases cell permeability to monosaccharides, amino acids and fatty acids. It accelerates glycolysis, the pentose phosphate cycle, and glycogen synthesis in liver. This chain is Insulin-1, found in Katsuwonus pelamis (Skipjack tuna).